A 374-amino-acid chain; its full sequence is N5-carboxyaminoimidazole ribonucleotide synthase (374 aa).

ATP is bound by residues arginine 108, lysine 148, 153–159 (GYDGKGQ), 183–186 (EKYL), glutamate 191, histidine 214, and 266–267 (NE). In terms of domain architecture, ATP-grasp spans 112–296 (KETLKSAGTK…QFDTHILAVT (185 aa)).

Belongs to the PurK/PurT family. In terms of assembly, homodimer.

The catalysed reaction is 5-amino-1-(5-phospho-beta-D-ribosyl)imidazole + hydrogencarbonate + ATP = 5-carboxyamino-1-(5-phospho-D-ribosyl)imidazole + ADP + phosphate + 2 H(+). The protein operates within purine metabolism; IMP biosynthesis via de novo pathway; 5-amino-1-(5-phospho-D-ribosyl)imidazole-4-carboxylate from 5-amino-1-(5-phospho-D-ribosyl)imidazole (N5-CAIR route): step 1/2. Its function is as follows. Catalyzes the ATP-dependent conversion of 5-aminoimidazole ribonucleotide (AIR) and HCO(3)(-) to N5-carboxyaminoimidazole ribonucleotide (N5-CAIR). This is N5-carboxyaminoimidazole ribonucleotide synthase from Staphylococcus aureus (strain COL).